The primary structure comprises 143 residues: Endoribonuclease YbeY (143 aa).

His-109, His-113, and Asp-119 together coordinate Zn(2+).

The protein belongs to the endoribonuclease YbeY family. The cofactor is Zn(2+).

It is found in the cytoplasm. Its function is as follows. Single strand-specific metallo-endoribonuclease involved in late-stage 70S ribosome quality control and in maturation of the 3' terminus of the 16S rRNA. This Christiangramia forsetii (strain DSM 17595 / CGMCC 1.15422 / KT0803) (Gramella forsetii) protein is Endoribonuclease YbeY.